The primary structure comprises 1138 residues: Pesticidal crystal protein Cry7Ab (1138 aa).

This sequence belongs to the delta endotoxin family.

Functionally, promotes colloidosmotic lysis by binding to the midgut epithelial cells of Coleoptera. The chain is Pesticidal crystal protein Cry7Ab (cry7Ab) from Bacillus thuringiensis serovar kumamotoensis.